We begin with the raw amino-acid sequence, 401 residues long: Exodeoxyribonuclease 7 large subunit (401 aa).

Belongs to the XseA family. Heterooligomer composed of large and small subunits.

The protein resides in the cytoplasm. The catalysed reaction is Exonucleolytic cleavage in either 5'- to 3'- or 3'- to 5'-direction to yield nucleoside 5'-phosphates.. Functionally, bidirectionally degrades single-stranded DNA into large acid-insoluble oligonucleotides, which are then degraded further into small acid-soluble oligonucleotides. This chain is Exodeoxyribonuclease 7 large subunit, found in Thermoanaerobacter sp. (strain X514).